Reading from the N-terminus, the 151-residue chain is Dehydrin Rab16D (151 aa).

Positions 1–138 (MEYQGQHGGH…TADAGGEKKG (138 aa)) are disordered. Residues 39–51 (EPAREDKKTDGVL) show a composition bias toward basic and acidic residues. Composition is skewed to low complexity over residues 90 to 105 (GNNQ…TTTG) and 117 to 132 (IATG…TADA).

Belongs to the plant dehydrin family.

This is Dehydrin Rab16D (RAB16D) from Oryza sativa subsp. indica (Rice).